We begin with the raw amino-acid sequence, 266 residues long: MLAKRIIPCLDVTGGRVVKGVNFVELRDAGDPVEIAARYNAQGADELTFLDITATSDGRDLILPIIESVASQVFIPLTVGGGVRTVEDVRRLLNAGADKTSFNSAAIANPEVINAASDKYGAQCIVVAIDAKRRTAEDEQRMGADGRAAGPGWDVYSHGGRKNTGLDAVQWAAEMARRGAGEILLTSMDRDGTKSGFDLKLTRAVSDAVPVPVIASGGVGSLDDLADGVTLGGADAVLAASIFHYGEFTVGQAKQRMAERGVPVRL.

Catalysis depends on residues D11 and D130.

It belongs to the HisA/HisF family. In terms of assembly, heterodimer of HisH and HisF.

Its subcellular location is the cytoplasm. The enzyme catalyses 5-[(5-phospho-1-deoxy-D-ribulos-1-ylimino)methylamino]-1-(5-phospho-beta-D-ribosyl)imidazole-4-carboxamide + L-glutamine = D-erythro-1-(imidazol-4-yl)glycerol 3-phosphate + 5-amino-1-(5-phospho-beta-D-ribosyl)imidazole-4-carboxamide + L-glutamate + H(+). Its pathway is amino-acid biosynthesis; L-histidine biosynthesis; L-histidine from 5-phospho-alpha-D-ribose 1-diphosphate: step 5/9. Its function is as follows. IGPS catalyzes the conversion of PRFAR and glutamine to IGP, AICAR and glutamate. The HisF subunit catalyzes the cyclization activity that produces IGP and AICAR from PRFAR using the ammonia provided by the HisH subunit. The sequence is that of Imidazole glycerol phosphate synthase subunit HisF from Delftia acidovorans (strain DSM 14801 / SPH-1).